A 502-amino-acid chain; its full sequence is Hexokinase-9 (502 aa).

The chain crosses the membrane as a helical span at residues 5 to 24 (AALASAAMAAAAVAVVSTVL). The region spanning 37-488 (RAEAVLLRDL…SGVGAALLAA (452 aa)) is the Hexokinase domain. The interval 92–230 (SGGEKGMFYA…GLDMKVTALV (139 aa)) is hexokinase small subdomain. 3 residues coordinate ADP: G106, T107, and N108. T196, K197, N231, and D232 together coordinate D-glucose. The hexokinase large subdomain stretch occupies residues 231 to 477 (NDTVGTLAAG…PSVMIKHVND (247 aa)). T255 serves as a coordination point for ADP. D-glucose contacts are provided by N258, E286, and E317. G442 lines the ADP pocket.

Belongs to the hexokinase family. Expressed in roots, leaves, flowers, immature seeds, endosperm and seed coat.

Its subcellular location is the plastid. It is found in the chloroplast outer membrane. It catalyses the reaction a D-hexose + ATP = a D-hexose 6-phosphate + ADP + H(+). It carries out the reaction D-fructose + ATP = D-fructose 6-phosphate + ADP + H(+). The enzyme catalyses D-glucose + ATP = D-glucose 6-phosphate + ADP + H(+). It participates in carbohydrate metabolism; hexose metabolism. Its pathway is carbohydrate degradation; glycolysis; D-glyceraldehyde 3-phosphate and glycerone phosphate from D-glucose: step 1/4. Functionally, fructose and glucose phosphorylating enzyme. The protein is Hexokinase-9 (HXK9) of Oryza sativa subsp. japonica (Rice).